The following is a 151-amino-acid chain: uncharacterized protein (151 aa).

The protein to equivalent protein in phage 82.

This is an uncharacterized protein from Escherichia coli (strain K12).